The chain runs to 352 residues: Coproporphyrin III ferrochelatase (352 aa).

Residues S52 and Y121 each coordinate Fe-coproporphyrin III. Fe(2+)-binding residues include H181 and E269.

Belongs to the ferrochelatase family.

The protein localises to the cytoplasm. It carries out the reaction Fe-coproporphyrin III + 2 H(+) = coproporphyrin III + Fe(2+). The protein operates within porphyrin-containing compound metabolism; protoheme biosynthesis. Involved in coproporphyrin-dependent heme b biosynthesis. Catalyzes the insertion of ferrous iron into coproporphyrin III to form Fe-coproporphyrin III. The sequence is that of Coproporphyrin III ferrochelatase from Nocardia farcinica (strain IFM 10152).